Here is a 390-residue protein sequence, read N- to C-terminus: Pyruvate dehydrogenase E1 component subunit alpha, somatic form, mitochondrial (390 aa).

A mitochondrion-targeting transit peptide spans 1-29; sequence MRKMLAAVSRVLSGVAQKPASRVLVASRH. Lys63 carries the N6-acetyllysine; alternate modification. An N6-succinyllysine; alternate modification is found at Lys63. His92, Tyr118, Arg119, Ala157, Gly165, Val167, Asp196, Gly197, Ala198, Asn225, and Tyr227 together coordinate pyruvate. 2 residues coordinate thiamine diphosphate: Tyr118 and Arg119. Thiamine diphosphate-binding residues include Gly165, Val167, Asp196, Gly197, Ala198, and Asn225. Asp196 contacts Mg(2+). Positions 225 and 227 each coordinate Mg(2+). A Phosphoserine; by PDK1 modification is found at Ser232. The residue at position 244 (Lys244) is an N6-acetyllysine; alternate. At Lys244 the chain carries N6-succinyllysine; alternate. Lys267 is modified (N6-acetyllysine). Position 277 is an N6-succinyllysine (Lys277). A thiamine diphosphate-binding site is contributed by His292. A Phosphoserine; by PDK1, PDK2, PDK3 and PDK4 modification is found at Ser293. At Ser295 the chain carries Phosphoserine. Ser300 is subject to Phosphoserine; by PDK1, PDK2, PDK3 and PDK4. Residue Tyr301 is modified to Phosphotyrosine. Lys313 bears the N6-acetyllysine; alternate mark. Lys313 is subject to N6-succinyllysine; alternate. N6-acetyllysine occurs at positions 321 and 336. At Lys385 the chain carries N6-succinyllysine.

As to quaternary structure, heterotetramer of two PDHA1 and two PDHB subunits. The heterotetramer interacts with DLAT, and is part of the multimeric pyruvate dehydrogenase complex that contains multiple copies of pyruvate dehydrogenase (E1), dihydrolipoamide acetyltransferase (DLAT, E2) and lipoamide dehydrogenase (DLD, E3). These subunits are bound to an inner core composed of about 48 DLAT and 12 PDHX molecules. Requires thiamine diphosphate as cofactor. The cofactor is Mg(2+). Phosphorylation at Ser-232, Ser-293 and Ser-300 by PDK family kinases inactivates the enzyme; for this phosphorylation at a single site is sufficient. Phosphorylation at Ser-293 interferes with access to active site, and thereby inactivates the enzyme. Dephosphorylation at all three sites, i.e. at Ser-232, Ser-293 and Ser-300, is required for reactivation. Post-translationally, acetylation alters the phosphorylation pattern. Deacetylated by SIRT3.

The protein resides in the mitochondrion matrix. The catalysed reaction is N(6)-[(R)-lipoyl]-L-lysyl-[protein] + pyruvate + H(+) = N(6)-[(R)-S(8)-acetyldihydrolipoyl]-L-lysyl-[protein] + CO2. Its activity is regulated as follows. Pyruvate dehydrogenase activity is inhibited by phosphorylation of PDHA1; it is reactivated by dephosphorylation. In terms of biological role, the pyruvate dehydrogenase complex catalyzes the overall conversion of pyruvate to acetyl-CoA and CO(2), and thereby links the glycolytic pathway to the tricarboxylic cycle. The sequence is that of Pyruvate dehydrogenase E1 component subunit alpha, somatic form, mitochondrial (PDHA1) from Bos taurus (Bovine).